Consider the following 67-residue polypeptide: Large ribosomal subunit protein bL35 (67 aa).

It belongs to the bacterial ribosomal protein bL35 family.

This is Large ribosomal subunit protein bL35 from Rhizobium etli (strain ATCC 51251 / DSM 11541 / JCM 21823 / NBRC 15573 / CFN 42).